Here is a 599-residue protein sequence, read N- to C-terminus: Sulfite reductase [NADPH] flavoprotein alpha-component (599 aa).

Residues 64–202 (VTLISASQTG…AASEWRACVV (139 aa)) enclose the Flavodoxin-like domain. FMN-binding positions include 70–75 (SQTGNA), 117–120 (STQG), and 153–162 (LGDTSYEFFC). The 215-residue stretch at 234–448 (DAPLTATLSV…IEHNDNFRLP (215 aa)) folds into the FAD-binding FR-type domain. FAD-binding positions include T322, A356, 386-389 (RLYS), 404-406 (TVG), Y410, and 419-422 (GGAS). Residues 519–520 (SR), 525–529 (KIYVQ), and D561 each bind NADP(+). FAD is bound at residue Y599.

This sequence belongs to the NADPH-dependent sulphite reductase flavoprotein subunit CysJ family. It in the N-terminal section; belongs to the flavodoxin family. The protein in the C-terminal section; belongs to the flavoprotein pyridine nucleotide cytochrome reductase family. In terms of assembly, alpha(8)-beta(8). The alpha component is a flavoprotein, the beta component is a hemoprotein. FAD serves as cofactor. Requires FMN as cofactor.

The catalysed reaction is hydrogen sulfide + 3 NADP(+) + 3 H2O = sulfite + 3 NADPH + 4 H(+). The protein operates within sulfur metabolism; hydrogen sulfide biosynthesis; hydrogen sulfide from sulfite (NADPH route): step 1/1. In terms of biological role, component of the sulfite reductase complex that catalyzes the 6-electron reduction of sulfite to sulfide. This is one of several activities required for the biosynthesis of L-cysteine from sulfate. The flavoprotein component catalyzes the electron flow from NADPH -&gt; FAD -&gt; FMN to the hemoprotein component. This Salmonella typhi protein is Sulfite reductase [NADPH] flavoprotein alpha-component.